The chain runs to 327 residues: GTPase Obg (327 aa).

One can recognise an Obg domain in the interval 1-159 (MKFLDQVKIY…YVIWLQLKTI (159 aa)). Residues 160–327 (ADVGIVGLPN…IKAKLLSYVS (168 aa)) enclose the OBG-type G domain. GTP contacts are provided by residues 166-173 (GLPNAGKS), 191-195 (FTTLN), 212-215 (DIPG), 279-282 (NKTD), and 308-310 (STL). Mg(2+) is bound by residues Ser-173 and Thr-193.

This sequence belongs to the TRAFAC class OBG-HflX-like GTPase superfamily. OBG GTPase family. As to quaternary structure, monomer. Mg(2+) is required as a cofactor.

It localises to the cytoplasm. Functionally, an essential GTPase which binds GTP, GDP and possibly (p)ppGpp with moderate affinity, with high nucleotide exchange rates and a fairly low GTP hydrolysis rate. Plays a role in control of the cell cycle, stress response, ribosome biogenesis and in those bacteria that undergo differentiation, in morphogenesis control. The chain is GTPase Obg from Pelagibacter ubique (strain HTCC1062).